A 604-amino-acid polypeptide reads, in one-letter code: Elongation factor 4 (604 aa).

Residues 7–189 enclose the tr-type G domain; sequence SKIRNFCIIA…SIVHLVPPPS (183 aa). GTP is bound by residues 19–24 and 136–139; these read DHGKST and NKID.

The protein belongs to the TRAFAC class translation factor GTPase superfamily. Classic translation factor GTPase family. LepA subfamily.

The protein localises to the cell inner membrane. It catalyses the reaction GTP + H2O = GDP + phosphate + H(+). Functionally, required for accurate and efficient protein synthesis under certain stress conditions. May act as a fidelity factor of the translation reaction, by catalyzing a one-codon backward translocation of tRNAs on improperly translocated ribosomes. Back-translocation proceeds from a post-translocation (POST) complex to a pre-translocation (PRE) complex, thus giving elongation factor G a second chance to translocate the tRNAs correctly. Binds to ribosomes in a GTP-dependent manner. This chain is Elongation factor 4, found in Synechococcus sp. (strain ATCC 27144 / PCC 6301 / SAUG 1402/1) (Anacystis nidulans).